A 261-amino-acid polypeptide reads, in one-letter code: Zinc import ATP-binding protein ZnuC (261 aa).

The region spanning 6 to 227 (IQLNNIHLRF…PEYLKLFGKQ (222 aa)) is the ABC transporter domain. An ATP-binding site is contributed by 38 to 45 (GPNGAGKS).

This sequence belongs to the ABC transporter superfamily. Zinc importer (TC 3.A.1.15.5) family. As to quaternary structure, the complex is composed of two ATP-binding proteins (ZnuC), two transmembrane proteins (ZnuB) and a solute-binding protein (ZnuA).

It localises to the cell inner membrane. The catalysed reaction is Zn(2+)(out) + ATP(in) + H2O(in) = Zn(2+)(in) + ADP(in) + phosphate(in) + H(+)(in). Its function is as follows. Part of the ABC transporter complex ZnuABC involved in zinc import. Responsible for energy coupling to the transport system. In Saccharophagus degradans (strain 2-40 / ATCC 43961 / DSM 17024), this protein is Zinc import ATP-binding protein ZnuC.